The chain runs to 215 residues: Large ribosomal subunit protein uL3 (215 aa).

The tract at residues 124-164 is disordered; the sequence is KRHGFSRGPMTHGSKNHREPGSTGAGTTPGRIYPGKRMAGR.

It belongs to the universal ribosomal protein uL3 family. As to quaternary structure, part of the 50S ribosomal subunit. Forms a cluster with proteins L14 and L19.

One of the primary rRNA binding proteins, it binds directly near the 3'-end of the 23S rRNA, where it nucleates assembly of the 50S subunit. This is Large ribosomal subunit protein uL3 from Synechococcus sp. (strain RCC307).